We begin with the raw amino-acid sequence, 74 residues long: Small cysteine-rich protein 8 (74 aa).

The N-terminal stretch at 1–21 (MAAKFHLCLLLIILGTITVQG) is a signal peptide. A propeptide spanning residues 22-31 (ARHPGKPHFF) is cleaved from the precursor.

This sequence belongs to the Cnidaria small cysteine-rich protein (SCRiP) family. beta subfamily. Contains 4 disulfide bonds.

The protein resides in the secreted. It is found in the nematocyst. Induces neurotoxic symptoms on zebrafish. Has also been claimed to be implied in calcification, but tests on homolog proteins suggest that proteins of this family have a neurotoxic function and not a calcification function. In Orbicella faveolata (Mountainous star coral), this protein is Small cysteine-rich protein 8.